The primary structure comprises 510 residues: Probable lipid II flippase MurJ (510 aa).

12 helical membrane-spanning segments follow: residues 13–33 (DVVI…LFAN), 81–101 (GLVS…AALF), 130–150 (FPYL…NTIG), 154–174 (VMSF…LFLA), 182–202 (LALA…QIPF), 240–260 (INLL…ISWL), 266–286 (LLEF…LPTL), 315–335 (IFLL…PMLL), 357–377 (AFNA…GYYA), 396–416 (MGFN…ASAM), 443–463 (VFFV…WYYV), and 481–501 (LVWL…LLGV).

It belongs to the MurJ/MviN family.

Its subcellular location is the cell inner membrane. It participates in cell wall biogenesis; peptidoglycan biosynthesis. Involved in peptidoglycan biosynthesis. Transports lipid-linked peptidoglycan precursors from the inner to the outer leaflet of the cytoplasmic membrane. The protein is Probable lipid II flippase MurJ of Haemophilus influenzae (strain ATCC 51907 / DSM 11121 / KW20 / Rd).